Consider the following 304-residue polypeptide: tRNA pseudouridine synthase B (304 aa).

The active-site Nucleophile is the aspartate 41.

It belongs to the pseudouridine synthase TruB family. Type 1 subfamily.

It catalyses the reaction uridine(55) in tRNA = pseudouridine(55) in tRNA. Responsible for synthesis of pseudouridine from uracil-55 in the psi GC loop of transfer RNAs. The chain is tRNA pseudouridine synthase B from Nitratidesulfovibrio vulgaris (strain ATCC 29579 / DSM 644 / CCUG 34227 / NCIMB 8303 / VKM B-1760 / Hildenborough) (Desulfovibrio vulgaris).